A 701-amino-acid polypeptide reads, in one-letter code: Elongation factor G (701 aa).

The 277-residue stretch at 11–287 (TKVRNIGIMA…AVIDYLPSPL (277 aa)) folds into the tr-type G domain. Residues 20-27 (AHIDAGKT), 84-88 (DTPGH), and 138-141 (NKMD) each bind GTP.

It belongs to the TRAFAC class translation factor GTPase superfamily. Classic translation factor GTPase family. EF-G/EF-2 subfamily.

It is found in the cytoplasm. Catalyzes the GTP-dependent ribosomal translocation step during translation elongation. During this step, the ribosome changes from the pre-translocational (PRE) to the post-translocational (POST) state as the newly formed A-site-bound peptidyl-tRNA and P-site-bound deacylated tRNA move to the P and E sites, respectively. Catalyzes the coordinated movement of the two tRNA molecules, the mRNA and conformational changes in the ribosome. The sequence is that of Elongation factor G from Mycobacterium marinum (strain ATCC BAA-535 / M).